The following is a 353-amino-acid chain: MTAILERRESTSLWGRFCNWVTSTENRLYIGWFGVLMIPTLLTATSVFIIAFIAAPPVDIDGIREPVSGSLLYGNNIISGAIIPTSAAIGLHFYPIWEAASVDEWLYNGGPYELIVLHFLLGVRCYMGREWELSFRLGMRPWIAVAYSAPVAAATAVFLIYPIGQGSFSDGMPLGISGTFNFMIVFQAEHNILMHPFHMLGVAGVFGGSLFSAMHGSLVTSSLIRETTENESANEGYRFGQEEETYNIVAAHGYFGRLIFQYASFNNSRSLHFFLAAWPVIGIWFTSLGISTMAFNLNGFNFNQSVVDSQGRVINTWADIINRANLGMEVMHERNAHNFPLDLAAVEAPSTIG.

Position 2 is an N-acetylthreonine (Thr-2). The residue at position 2 (Thr-2) is a Phosphothreonine. The next 3 helical transmembrane spans lie at 29 to 46 (YIGW…TATS), 118 to 133 (HFLL…EWEL), and 142 to 156 (WIAV…AATA). A chlorophyll a-binding site is contributed by His-118. Tyr-126 serves as a coordination point for pheophytin a. The [CaMn4O5] cluster site is built by Asp-170 and Glu-189. A helical membrane pass occupies residues 197–218 (FHMLGVAGVFGGSLFSAMHGSL). His-198 lines the chlorophyll a pocket. Residues His-215 and 264–265 (SF) contribute to the a quinone site. His-215 contributes to the Fe cation binding site. His-272 contacts Fe cation. The helical transmembrane segment at 274 to 288 (FLAAWPVIGIWFTSL) threads the bilayer. [CaMn4O5] cluster is bound by residues His-332, Glu-333, Asp-342, and Ala-344. Residues 345–353 (AVEAPSTIG) constitute a propeptide that is removed on maturation.

This sequence belongs to the reaction center PufL/M/PsbA/D family. In terms of assembly, PSII is composed of 1 copy each of membrane proteins PsbA, PsbB, PsbC, PsbD, PsbE, PsbF, PsbH, PsbI, PsbJ, PsbK, PsbL, PsbM, PsbT, PsbX, PsbY, PsbZ, Psb30/Ycf12, at least 3 peripheral proteins of the oxygen-evolving complex and a large number of cofactors. It forms dimeric complexes. Requires The D1/D2 heterodimer binds P680, chlorophylls that are the primary electron donor of PSII, and subsequent electron acceptors. It shares a non-heme iron and each subunit binds pheophytin, quinone, additional chlorophylls, carotenoids and lipids. D1 provides most of the ligands for the Mn4-Ca-O5 cluster of the oxygen-evolving complex (OEC). There is also a Cl(-1) ion associated with D1 and D2, which is required for oxygen evolution. The PSII complex binds additional chlorophylls, carotenoids and specific lipids. as cofactor. Post-translationally, tyr-161 forms a radical intermediate that is referred to as redox-active TyrZ, YZ or Y-Z. C-terminally processed by CTPA; processing is essential to allow assembly of the oxygen-evolving complex and thus photosynthetic growth.

It localises to the plastid. It is found in the chloroplast thylakoid membrane. The enzyme catalyses 2 a plastoquinone + 4 hnu + 2 H2O = 2 a plastoquinol + O2. Photosystem II (PSII) is a light-driven water:plastoquinone oxidoreductase that uses light energy to abstract electrons from H(2)O, generating O(2) and a proton gradient subsequently used for ATP formation. It consists of a core antenna complex that captures photons, and an electron transfer chain that converts photonic excitation into a charge separation. The D1/D2 (PsbA/PsbD) reaction center heterodimer binds P680, the primary electron donor of PSII as well as several subsequent electron acceptors. This is Photosystem II protein D1 from Landoltia punctata (Dotted duckmeat).